A 105-amino-acid chain; its full sequence is MYAIIKCGGKQYKVSEGDILDIDYTGKAAKETLEITDVLAINNGELKTGAAVANAKVEAVVVLDGTGVNRAKKVIIYKKRRRKDSKLKRGFRRSFTKVRITKIAA.

It belongs to the bacterial ribosomal protein bL21 family. In terms of assembly, part of the 50S ribosomal subunit. Contacts protein L20.

In terms of biological role, this protein binds to 23S rRNA in the presence of protein L20. The protein is Large ribosomal subunit protein bL21 of Aliarcobacter butzleri (strain RM4018) (Arcobacter butzleri).